We begin with the raw amino-acid sequence, 302 residues long: Glutaminase (302 aa).

7 residues coordinate substrate: Ser-61, Asn-111, Glu-155, Asn-162, Tyr-186, Tyr-238, and Val-256.

It belongs to the glutaminase family. Homotetramer.

It carries out the reaction L-glutamine + H2O = L-glutamate + NH4(+). The sequence is that of Glutaminase from Pseudomonas aeruginosa (strain LESB58).